A 216-amino-acid chain; its full sequence is NKG2-D type II integral membrane protein (216 aa).

The Cytoplasmic segment spans residues methionine 1–serine 51. The chain crosses the membrane as a helical; Signal-anchor for type II membrane protein span at residues proline 52 to threonine 72. Residues isoleucine 73 to valine 216 lie on the Extracellular side of the membrane. Disulfide bonds link cysteine 96-cysteine 105 and cysteine 99-cysteine 110. Residues proline 98–glutamine 213 form the C-type lectin domain. Asparagine 115, asparagine 131, asparagine 163, and asparagine 202 each carry an N-linked (GlcNAc...) asparagine glycan. Disulfide bonds link cysteine 127–cysteine 211 and cysteine 189–cysteine 203.

In terms of assembly, homodimer; disulfide-linked. Heterohexamer composed of two subunits of KLRK1 and four subunits of HCST/DAP10. Interacts (via transmembrane domain) with HCST/DAP10 (via transmembrane domain); the interaction is required for KLRK1 NK cell surface and induces NK cell-mediated cytotoxicity. Can form disulfide-bonded heterodimer with CD94. Interacts with CEACAM1; recruits PTPN6 that dephosphorylates VAV1. Natural killer cells.

It is found in the cell membrane. In terms of biological role, functions as an activating and costimulatory receptor involved in immunosurveillance upon binding to various cellular stress-inducible ligands displayed at the surface of autologous tumor cells and virus-infected cells. Provides both stimulatory and costimulatory innate immune responses on activated killer (NK) cells, leading to cytotoxic activity. Acts as a costimulatory receptor for T-cell receptor (TCR) in CD8(+) T-cell-mediated adaptive immune responses by amplifying T-cell activation. Stimulates perforin-mediated elimination of ligand-expressing tumor cells. Signaling involves calcium influx, culminating in the expression of TNF-alpha. Participates in NK cell-mediated bone marrow graft rejection. May play a regulatory role in differentiation and survival of NK cells. Binds to ligands belonging to various subfamilies of MHC class I-related glycoproteins. The polypeptide is NKG2-D type II integral membrane protein (KLRK1) (Macaca fascicularis (Crab-eating macaque)).